Reading from the N-terminus, the 477-residue chain is Glycogen synthase (477 aa).

Residue Lys15 coordinates ADP-alpha-D-glucose.

It belongs to the glycosyltransferase 1 family. Bacterial/plant glycogen synthase subfamily.

The enzyme catalyses [(1-&gt;4)-alpha-D-glucosyl](n) + ADP-alpha-D-glucose = [(1-&gt;4)-alpha-D-glucosyl](n+1) + ADP + H(+). It participates in glycan biosynthesis; glycogen biosynthesis. In terms of biological role, synthesizes alpha-1,4-glucan chains using ADP-glucose. This chain is Glycogen synthase, found in Salmonella choleraesuis (strain SC-B67).